The sequence spans 354 residues: NADH-quinone oxidoreductase subunit H (354 aa).

Transmembrane regions (helical) follow at residues 25–45 (LVRI…LILW), 91–111 (WLYL…WAVI), 126–146 (LLYA…AGWA), 170–190 (MGFA…SEIV), 205–225 (FLSW…ISGI), 253–273 (MAFA…SALA), 290–310 (FIPG…VFIW), and 330–350 (VFLP…MSPL).

It belongs to the complex I subunit 1 family. As to quaternary structure, NDH-1 is composed of 14 different subunits. Subunits NuoA, H, J, K, L, M, N constitute the membrane sector of the complex.

The protein localises to the cell inner membrane. The enzyme catalyses a quinone + NADH + 5 H(+)(in) = a quinol + NAD(+) + 4 H(+)(out). Functionally, NDH-1 shuttles electrons from NADH, via FMN and iron-sulfur (Fe-S) centers, to quinones in the respiratory chain. The immediate electron acceptor for the enzyme in this species is believed to be ubiquinone. Couples the redox reaction to proton translocation (for every two electrons transferred, four hydrogen ions are translocated across the cytoplasmic membrane), and thus conserves the redox energy in a proton gradient. This subunit may bind ubiquinone. The chain is NADH-quinone oxidoreductase subunit H from Burkholderia mallei (strain ATCC 23344).